Reading from the N-terminus, the 215-residue chain is Elongation factor Ts (215 aa).

The involved in Mg(2+) ion dislocation from EF-Tu stretch occupies residues T80 to V83.

This sequence belongs to the EF-Ts family.

Its subcellular location is the cytoplasm. In terms of biological role, associates with the EF-Tu.GDP complex and induces the exchange of GDP to GTP. It remains bound to the aminoacyl-tRNA.EF-Tu.GTP complex up to the GTP hydrolysis stage on the ribosome. The polypeptide is Elongation factor Ts (Alkaliphilus metalliredigens (strain QYMF)).